A 133-amino-acid polypeptide reads, in one-letter code: S-adenosylmethionine decarboxylase proenzyme (133 aa).

Ser-63 (schiff-base intermediate with substrate; via pyruvic acid) is an active-site residue. Ser-63 is subject to Pyruvic acid (Ser); by autocatalysis. The active-site Proton acceptor; for processing activity is the His-68. Cys-83 acts as the Proton donor; for catalytic activity in catalysis.

It belongs to the prokaryotic AdoMetDC family. Type 1 subfamily. In terms of assembly, heterotetramer of two alpha and two beta chains arranged as a dimer of alpha/beta heterodimers. Pyruvate is required as a cofactor. Is synthesized initially as an inactive proenzyme. Formation of the active enzyme involves a self-maturation process in which the active site pyruvoyl group is generated from an internal serine residue via an autocatalytic post-translational modification. Two non-identical subunits are generated from the proenzyme in this reaction, and the pyruvate is formed at the N-terminus of the alpha chain, which is derived from the carboxyl end of the proenzyme. The post-translation cleavage follows an unusual pathway, termed non-hydrolytic serinolysis, in which the side chain hydroxyl group of the serine supplies its oxygen atom to form the C-terminus of the beta chain, while the remainder of the serine residue undergoes an oxidative deamination to produce ammonia and the pyruvoyl group blocking the N-terminus of the alpha chain.

It carries out the reaction S-adenosyl-L-methionine + H(+) = S-adenosyl 3-(methylsulfanyl)propylamine + CO2. The protein operates within amine and polyamine biosynthesis; S-adenosylmethioninamine biosynthesis; S-adenosylmethioninamine from S-adenosyl-L-methionine: step 1/1. Catalyzes the decarboxylation of S-adenosylmethionine to S-adenosylmethioninamine (dcAdoMet), the propylamine donor required for the synthesis of the polyamines spermine and spermidine from the diamine putrescine. The sequence is that of S-adenosylmethionine decarboxylase proenzyme from Acidithiobacillus ferrooxidans (strain ATCC 23270 / DSM 14882 / CIP 104768 / NCIMB 8455) (Ferrobacillus ferrooxidans (strain ATCC 23270)).